Reading from the N-terminus, the 61-residue chain is Small ribosomal subunit protein uS14B (61 aa).

Zn(2+) is bound by residues Cys24, Cys27, Cys40, and Cys43.

It belongs to the universal ribosomal protein uS14 family. Zinc-binding uS14 subfamily. As to quaternary structure, part of the 30S ribosomal subunit. Contacts proteins S3 and S10. Zn(2+) serves as cofactor.

In terms of biological role, binds 16S rRNA, required for the assembly of 30S particles and may also be responsible for determining the conformation of the 16S rRNA at the A site. This is Small ribosomal subunit protein uS14B from Mycobacteroides abscessus (strain ATCC 19977 / DSM 44196 / CCUG 20993 / CIP 104536 / JCM 13569 / NCTC 13031 / TMC 1543 / L948) (Mycobacterium abscessus).